A 307-amino-acid polypeptide reads, in one-letter code: Adenosylcobinamide-GDP ribazoletransferase (307 aa).

8 consecutive transmembrane segments (helical) span residues 22–42 (PLFE…VPGA), 58–78 (PFVG…IGPI), 80–100 (GVIH…WELL), 137–157 (FGLA…ASLV), 161–181 (VWWM…VTAL), 212–232 (TAAL…LTSV), 248–268 (AWLG…AALF), and 283–303 (CIGA…AVVA).

This sequence belongs to the CobS family. Mg(2+) serves as cofactor.

It is found in the cell membrane. It catalyses the reaction alpha-ribazole + adenosylcob(III)inamide-GDP = adenosylcob(III)alamin + GMP + H(+). The enzyme catalyses alpha-ribazole 5'-phosphate + adenosylcob(III)inamide-GDP = adenosylcob(III)alamin 5'-phosphate + GMP + H(+). It participates in cofactor biosynthesis; adenosylcobalamin biosynthesis; adenosylcobalamin from cob(II)yrinate a,c-diamide: step 7/7. In terms of biological role, joins adenosylcobinamide-GDP and alpha-ribazole to generate adenosylcobalamin (Ado-cobalamin). Also synthesizes adenosylcobalamin 5'-phosphate from adenosylcobinamide-GDP and alpha-ribazole 5'-phosphate. The polypeptide is Adenosylcobinamide-GDP ribazoletransferase (Corynebacterium glutamicum (strain ATCC 13032 / DSM 20300 / JCM 1318 / BCRC 11384 / CCUG 27702 / LMG 3730 / NBRC 12168 / NCIMB 10025 / NRRL B-2784 / 534)).